We begin with the raw amino-acid sequence, 81 residues long: Acyl carrier protein (81 aa).

The Carrier domain maps to D4–K79. Position 39 is an O-(pantetheine 4'-phosphoryl)serine (S39).

The protein belongs to the acyl carrier protein (ACP) family. Post-translationally, 4'-phosphopantetheine is transferred from CoA to a specific serine of apo-ACP by AcpS. This modification is essential for activity because fatty acids are bound in thioester linkage to the sulfhydryl of the prosthetic group.

It localises to the cytoplasm. Its pathway is lipid metabolism; fatty acid biosynthesis. In terms of biological role, carrier of the growing fatty acid chain in fatty acid biosynthesis. The polypeptide is Acyl carrier protein (Synechococcus sp. (strain JA-3-3Ab) (Cyanobacteria bacterium Yellowstone A-Prime)).